The following is a 150-amino-acid chain: Large ribosomal subunit protein bL9 (150 aa).

The protein belongs to the bacterial ribosomal protein bL9 family.

In terms of biological role, binds to the 23S rRNA. This is Large ribosomal subunit protein bL9 from Ruthia magnifica subsp. Calyptogena magnifica.